Here is a 272-residue protein sequence, read N- to C-terminus: Outer surface protein A (272 aa).

Residues 1–16 (MKKYLLGIGLILALIA) form the signal peptide. The N-palmitoyl cysteine moiety is linked to residue Cys17. Residue Cys17 is the site of S-diacylglycerol cysteine attachment.

It belongs to the OspA lipoprotein family.

The protein resides in the cell outer membrane. It is found in the cell surface. The chain is Outer surface protein A from Borreliella burgdorferi (Lyme disease spirochete).